The following is a 147-amino-acid chain: Calcium-regulated heat stable protein 1 (147 aa).

Residues 1-12 (MSSEPPPPPQPP) are compositionally biased toward pro residues. The segment at 1-49 (MSSEPPPPPQPPTHQTSIGLLDTPRARDRSPSPLRGNVVPSPLPTRRTR) is disordered. An N-acetylserine modification is found at Ser-2. 3 positions are modified to phosphoserine: Ser-30, Ser-32, and Ser-41. The residue at position 45 (Thr-45) is a Phosphothreonine. 2 positions are modified to phosphoserine: Ser-52 and Ser-58. Residues 62–129 (VYKGVCKCFC…KLQAVEVVIT (68 aa)) form the CSD domain. 2 positions are modified to phosphoserine: Ser-146 and Ser-147.

Homodimer. Interacts with STYX. Post-translationally, can be phosphorylated by DYRK2 (in vitro). Dephosphorylated by calcineurin in a Ca(2+) dependent manner, and probably by PP2A or PP4 serine phosphatases in cAMP- and PKC-mediated pathways. As to expression, widely expressed.

Its subcellular location is the cytoplasm. The protein localises to the P-body. It localises to the cytoplasmic granule. Its function is as follows. Binds mRNA and regulates the stability of target mRNA. The chain is Calcium-regulated heat stable protein 1 (Carhsp1) from Rattus norvegicus (Rat).